The chain runs to 772 residues: E3 ubiquitin-protein ligase UHRF1 (772 aa).

Residues 1-77 (MWIQVRTMDG…IVQLLVRQIP (77 aa)) form the Ubiquitin-like domain. The segment at 90 to 111 (SDASAGCGSGQRDSDSGSGEGA) is disordered. Tudor-like regions lie at residues 129 to 205 (SLYK…LRAR) and 212 to 281 (EIKV…IEEP). Positions 291-299 (PQKRQNGPE) are linker. Residues 297–364 (GPECKHCKDN…DWYCPDCRND (68 aa)) form a PHD-type zinc finger. Histone H3R2me0 binding regions lie at residues 331-335 (CDECD) and 351-353 (PQD). Residues 417–580 (GPIPGVPVGT…FLVWRYLLRR (164 aa)) form the YDG domain. The required to promote base flipping stretch occupies residues 443–444 (HV). DNA-binding positions include 461-462 (AG) and Asp-467. Required for formation of a 5-methylcytosine-binding pocket stretches follow at residues 464 to 467 (YEDD) and 476 to 479 (YTGS). Positions 615–626 (SKEREKENKTED) are enriched in basic and acidic residues. A disordered region spans residues 615-649 (SKEREKENKTEDEPIDSPSKGKRKRNSDNEQTAAK). The RING-type zinc finger occupies 703 to 742 (CICCQEVVYEPVTTECHHNICKGCLDRSFKALVHSCPACR).

It is found in the nucleus. It catalyses the reaction S-ubiquitinyl-[E2 ubiquitin-conjugating enzyme]-L-cysteine + [acceptor protein]-L-lysine = [E2 ubiquitin-conjugating enzyme]-L-cysteine + N(6)-ubiquitinyl-[acceptor protein]-L-lysine.. The protein operates within protein modification; protein ubiquitination. Its function is as follows. Multidomain protein that acts as a key epigenetic regulator by bridging DNA methylation and chromatin modification. Specifically recognizes and binds hemimethylated DNA at replication forks via its YDG domain and recruits dnmt1 methyltransferase to ensure faithful propagation of the DNA methylation patterns through DNA replication. In addition to its role in maintenance of DNA methylation, also plays a key role in chromatin modification: through its tudor-like regions and PHD-type zinc fingers, specifically recognizes and binds histone H3 trimethylated at 'Lys-9' (H3K9me3) and unmethylated at 'Arg-2' (H3R2me0), respectively, and recruits chromatin proteins. Enriched in pericentric heterochromatin where it recruits different chromatin modifiers required for this chromatin replication. Also localizes to euchromatic regions where it negatively regulates transcription possibly by impacting DNA methylation and histone modifications. Has E3 ubiquitin-protein ligase activity by mediating the ubiquitination of target proteins. However, it is still unclear how E3 ubiquitin-protein ligase activity is related to its role in chromatin in vivo. In Xenopus laevis (African clawed frog), this protein is E3 ubiquitin-protein ligase UHRF1 (uhrf1).